A 111-amino-acid chain; its full sequence is X antigen family member 3 (111 aa).

Residues 1–111 (MIWRGRSTYR…PEGGDRQPQV (111 aa)) are disordered. Residues 29–40 (PGDEEPQQEEPP) show a composition bias toward acidic residues. A compositionally biased stretch (basic and acidic residues) spans 97–111 (EQFKMPEGGDRQPQV).

It belongs to the GAGE family.

This is X antigen family member 3 (XAGE3) from Homo sapiens (Human).